A 670-amino-acid chain; its full sequence is Glycine--tRNA ligase beta subunit (670 aa).

The protein belongs to the class-II aminoacyl-tRNA synthetase family. As to quaternary structure, tetramer of two alpha and two beta subunits.

The protein localises to the cytoplasm. It carries out the reaction tRNA(Gly) + glycine + ATP = glycyl-tRNA(Gly) + AMP + diphosphate. This is Glycine--tRNA ligase beta subunit from Thermotoga neapolitana (strain ATCC 49049 / DSM 4359 / NBRC 107923 / NS-E).